Reading from the N-terminus, the 444-residue chain is MTELRQRVVREDAPPEDKESESEAKLDGETASDSESRAETAPLPTSVDDTPEVLNRALSNLSSRWKNWWVRGILTLAMIAFFFIIIYLGPMVLMMIVMCVQIKCFHEIITIGYNVYHSYDLPWFRTLSWYFLLCVNYFFYGETVTDYFFTLVQREEPLRILSKYHRFISFALYLTGFCMFVLSLVKKHYRLQFYMFGWTHVTLLIVVTQSHLVIHNLFEGMIWFIVPISCVICNDIMAYMFGFFFGRTPLIKLSPKKTWEGFIGGFFATVVFGLLLSYVMSGYRCFVCPVEYNNDTNSFTVDCEPSDLFRLQEYNIPGVIQSAIGWKTVRMYPFQIHSIALSTFASLIGPFGGFFASGFKRAFKIKDFANTIPGHGGIMDRFDCQYLMATFVNVYIASFIRGPNPSKLIQQFLTLRPDQQLHIFNTLKSHLTDKGILTSALEDE.

Residues 1–38 (MTELRQRVVREDAPPEDKESESEAKLDGETASDSESRA) are compositionally biased toward basic and acidic residues. Residues 1 to 48 (MTELRQRVVREDAPPEDKESESEAKLDGETASDSESRAETAPLPTSVD) form a disordered region. The residue at position 20 (serine 20) is a Phosphoserine. Threonine 30 bears the Phosphothreonine mark. Phosphoserine is present on residues serine 32, serine 34, and serine 36. Threonine 50 is modified (phosphothreonine). A run of 6 helical transmembrane segments spans residues 78-98 (MIAF…MIVM), 129-149 (WYFL…DYFF), 165-185 (HRFI…LSLV), 212-232 (LVIH…SCVI), 261-281 (GFIG…YVMS), and 339-359 (IALS…ASGF).

Belongs to the CDS family. As to quaternary structure, homodimer. In terms of tissue distribution, ubiquitous. Expressed in the ganglion cell layer and inner nuclear layer of the retina.

Its subcellular location is the endoplasmic reticulum membrane. The enzyme catalyses a 1,2-diacyl-sn-glycero-3-phosphate + CTP + H(+) = a CDP-1,2-diacyl-sn-glycerol + diphosphate. The catalysed reaction is 1-octadecanoyl-2-(5Z,8Z,11Z,14Z-eicosatetraenoyl)-sn-glycero-3-phosphate + CTP + H(+) = 1-octadecanoyl-2-(5Z,8Z,11Z,14Z-eicosatetraenoyl)-sn-glycero-3-cytidine-5'-diphosphate + diphosphate. It catalyses the reaction 1-octadecanoyl-2-(9Z,12Z-octadecadienoyl)-sn-glycero-3-phosphate + CTP + H(+) = 1-octadecanoyl-2-(9Z,12Z-octadecadienoyl)-sn-glycero-3-cytidine-5'-diphosphate + diphosphate. It carries out the reaction 1-hexadecanoyl-2-(5Z,8Z,11Z,14Z-eicosatetraenoyl)-sn-glycero-3-phosphate + CTP + H(+) = 1-hexadecanoyl-2-(5Z,8Z,11Z,14Z-eicosatetraenoyl)-sn-glycero-3-cytidine-5'-diphosphate + diphosphate. The enzyme catalyses 1,2-di-(5Z,8Z,11Z,14Z)-eicosatetraenoyl-sn-glycero-3-phosphate + CTP + H(+) = 1,2-di-(5Z,8Z,11Z,14Z-eicosatetraenoyl)-sn-glycero-3-cytidine-5'-diphosphate + diphosphate. The catalysed reaction is 1-octadecanoyl-2-(9Z-octadecenoyl)-sn-glycero-3-phosphate + CTP + H(+) = 1-octadecanoyl-2-(9Z-octadecenoyl)-sn-glycero-3-cytidine-5'-diphosphate + diphosphate. It catalyses the reaction 1-octadecanoyl-2-(4Z,7Z,10Z,13Z,16Z,19Z-docosahexaenoyl)-sn-glycero-3-phosphate + CTP + H(+) = 1-octadecanoyl-2-(4Z,7Z,10Z,13Z,16Z,19Z-docosahexaenoyl)-sn-glycero-3-cytidine-5'-diphosphate + diphosphate. It carries out the reaction 1,2-di-(9Z,12Z-octadecadienoyl)-sn-glycero-3-phosphate + CTP + H(+) = 1,2-di-(9Z,12Z-octadecadienoyl)-sn-glycero-3-cytidine-5'-diphosphate + diphosphate. The enzyme catalyses 1,2-di-(9Z-octadecenoyl)-sn-glycero-3-phosphate + CTP + H(+) = 1,2-di-(9Z-octadecenoyl)-sn-glycero-3-cytidine-5'-diphosphate + diphosphate. The protein operates within phospholipid metabolism; CDP-diacylglycerol biosynthesis; CDP-diacylglycerol from sn-glycerol 3-phosphate: step 3/3. Catalyzes the conversion of phosphatidic acid (PA) to CDP-diacylglycerol (CDP-DAG), an essential intermediate in the synthesis of phosphatidylglycerol, cardiolipin and phosphatidylinositol. Exhibits specificity for the nature of the acyl chains at the sn-1 and sn-2 positions in the substrate, PA and the preferred acyl chain composition is 1-stearoyl-2-arachidonoyl-sn-phosphatidic acid. Plays an important role in regulating the growth and maturation of lipid droplets which are storage organelles at the center of lipid and energy homeostasis. The chain is Phosphatidate cytidylyltransferase 2 from Mus musculus (Mouse).